A 331-amino-acid chain; its full sequence is FFAAVEMRDNPALRDIPIAIGGSRERRGVISTANYPARKFGVRSAMPTGMALKLCPHLTLLPGRFDAYKEASNHIREIFSRYTSRIEPLSLDEAYLDVTDSVHCHGSATLIAQEIRQTIFNELQLTASAGIAPVKFLAKIASDMNKPNGQFVITPADVPAFLQTLPLAKIPGVGKVSAAKLEAMGLRTCGDVQKCDLVTLLKRFGKFGRILWERSQGIDERDVNSERLRKSVGVERTMAEDIHHWSECEAIIERLYPELERRLAKVKPDLLIARQGVKLKFDDFQQTTQEHVWPRLNKADLIATARKTWDERRGGRGVRLVGLHVTLLDPQ.

The 174-residue stretch at F1 to G174 folds into the UmuC domain. Residue D92 participates in Mg(2+) binding. Residue E93 is part of the active site.

This sequence belongs to the DNA polymerase type-Y family. In terms of assembly, monomer. Requires Mg(2+) as cofactor.

Its subcellular location is the cytoplasm. The catalysed reaction is DNA(n) + a 2'-deoxyribonucleoside 5'-triphosphate = DNA(n+1) + diphosphate. Poorly processive, error-prone DNA polymerase involved in untargeted mutagenesis. Copies undamaged DNA at stalled replication forks, which arise in vivo from mismatched or misaligned primer ends. These misaligned primers can be extended by PolIV. Exhibits no 3'-5' exonuclease (proofreading) activity. May be involved in translesional synthesis, in conjunction with the beta clamp from PolIII. The chain is DNA polymerase IV from Escherichia fergusonii.